Consider the following 191-residue polypeptide: Protein Ves (191 aa).

It belongs to the Ves family.

This chain is Protein Ves, found in Citrobacter koseri (strain ATCC BAA-895 / CDC 4225-83 / SGSC4696).